The sequence spans 178 residues: Fatty-acid and retinol-binding protein 1 (178 aa).

An N-terminal signal peptide occupies residues 1–16 (MYHQLILMALIGVIMA). 2 coiled-coil regions span residues 67–89 (DAAL…ELRN) and 122–154 (QKLD…LKAT).

Belongs to the fatty-acid and retinol-binding protein (FARBP) family. Not glycosylated.

The protein resides in the secreted. Functionally, binds retinol and different fatty acids. The protein is Fatty-acid and retinol-binding protein 1 of Litomosoides sigmodontis (Filarial nematode worm).